Here is a 1848-residue protein sequence, read N- to C-terminus: Histone-lysine N-methyltransferase, H3 lysine-79 specific (1848 aa).

The DOT1 domain occupies D19–K336. S-adenosyl-L-methionine is bound by residues Y142–T145, F165–Q174, E192, and D228–F229. Disordered regions lie at residues K338–A537, A558–R593, L886–V908, P960–L996, L1033–L1075, H1165–V1190, Q1221–S1333, Q1345–G1374, V1432–A1463, A1486–Y1508, E1529–E1559, K1573–H1604, S1637–P1713, and Q1731–T1757. Residues G339 to A360 show a composition bias toward basic and acidic residues. Residues Q364–N373 show a composition bias toward basic residues. The span at A391–S405 shows a compositional bias: low complexity. Residues S419–R428 show a composition bias toward polar residues. 2 stretches are compositionally biased toward low complexity: residues Q429–Q439 and D453–G474. 3 positions are modified to phosphoserine: S491, S492, and S494. The span at G507–V518 shows a compositional bias: gly residues. 2 stretches are compositionally biased toward basic residues: residues T526 to R535 and R582 to R593. Positions Q1221–Q1235 are enriched in low complexity. Residues H1236 to H1263 are compositionally biased toward basic residues. Residues E1289–P1300 show a composition bias toward low complexity. Phosphoserine is present on residues S1318, S1324, and S1325. The segment covering Q1532–S1545 has biased composition (low complexity). The segment covering Y1574–R1583 has biased composition (basic and acidic residues). Low complexity-rich tracts occupy residues A1585–G1598 and H1681–S1696. The segment covering C1697–G1706 has biased composition (polar residues).

It belongs to the class I-like SAM-binding methyltransferase superfamily. DOT1 family. As to expression, broadly expressed in most tissues. Expressed in a large subset of neurons and in a small subset of glial cells.

The protein resides in the nucleus. The catalysed reaction is L-lysyl(79)-[histone H3] + 3 S-adenosyl-L-methionine = N(6),N(6),N(6)-trimethyl-L-lysyl(79)-[histone H3] + 3 S-adenosyl-L-homocysteine + 3 H(+). Its function is as follows. Histone methyltransferase. Methylates 'Lys-79' of histone H3. Required for Polycomb Group (PcG) and trithorax Group (trxG) maintenance of expression. Also involved in telomeric silencing but do not in centric heterochromatin. Probably participates in pairing sensitivity. The polypeptide is Histone-lysine N-methyltransferase, H3 lysine-79 specific (gpp) (Drosophila melanogaster (Fruit fly)).